The following is a 441-amino-acid chain: Tubulin alpha chain (441 aa).

The GTP site is built by Q11, E68, S137, G141, T142, T176, N203, and N224. E68 contributes to the Mg(2+) binding site. E250 is a catalytic residue.

It belongs to the tubulin family. As to quaternary structure, dimer of alpha and beta chains. A typical microtubule is a hollow water-filled tube with an outer diameter of 25 nm and an inner diameter of 15 nM. Alpha-beta heterodimers associate head-to-tail to form protofilaments running lengthwise along the microtubule wall with the beta-tubulin subunit facing the microtubule plus end conferring a structural polarity. Microtubules usually have 13 protofilaments but different protofilament numbers can be found in some organisms and specialized cells. It depends on Mg(2+) as a cofactor.

The protein resides in the cytoplasm. It is found in the cytoskeleton. It catalyses the reaction GTP + H2O = GDP + phosphate + H(+). Tubulin is the major constituent of microtubules, a cylinder consisting of laterally associated linear protofilaments composed of alpha- and beta-tubulin heterodimers. Microtubules grow by the addition of GTP-tubulin dimers to the microtubule end, where a stabilizing cap forms. Below the cap, tubulin dimers are in GDP-bound state, owing to GTPase activity of alpha-tubulin. The sequence is that of Tubulin alpha chain (TUB1) from Encephalitozoon cuniculi (strain GB-M1) (Microsporidian parasite).